A 461-amino-acid polypeptide reads, in one-letter code: Argininosuccinate lyase (461 aa).

It belongs to the lyase 1 family. Argininosuccinate lyase subfamily.

The protein resides in the cytoplasm. The enzyme catalyses 2-(N(omega)-L-arginino)succinate = fumarate + L-arginine. Its pathway is amino-acid biosynthesis; L-arginine biosynthesis; L-arginine from L-ornithine and carbamoyl phosphate: step 3/3. This Aeromonas hydrophila subsp. hydrophila (strain ATCC 7966 / DSM 30187 / BCRC 13018 / CCUG 14551 / JCM 1027 / KCTC 2358 / NCIMB 9240 / NCTC 8049) protein is Argininosuccinate lyase.